The following is a 138-amino-acid chain: Nucleoside diphosphate kinase (138 aa).

Positions 9, 57, 85, 91, 102, and 112 each coordinate ATP. H115 serves as the catalytic Pros-phosphohistidine intermediate.

Belongs to the NDK family. Homotetramer. Mg(2+) serves as cofactor.

It localises to the cytoplasm. It catalyses the reaction a 2'-deoxyribonucleoside 5'-diphosphate + ATP = a 2'-deoxyribonucleoside 5'-triphosphate + ADP. The enzyme catalyses a ribonucleoside 5'-diphosphate + ATP = a ribonucleoside 5'-triphosphate + ADP. Functionally, major role in the synthesis of nucleoside triphosphates other than ATP. The ATP gamma phosphate is transferred to the NDP beta phosphate via a ping-pong mechanism, using a phosphorylated active-site intermediate. The chain is Nucleoside diphosphate kinase from Desulforapulum autotrophicum (strain ATCC 43914 / DSM 3382 / VKM B-1955 / HRM2) (Desulfobacterium autotrophicum).